Consider the following 63-residue polypeptide: MGRIRQTFIKRTGEELIEKFADKFTSDFEENKKAVEEVAMISTKTLRNRVAGYVTAKVKKMNA.

This sequence belongs to the eukaryotic ribosomal protein eS17 family.

In Methanococcus maripaludis (strain C7 / ATCC BAA-1331), this protein is Small ribosomal subunit protein eS17.